The primary structure comprises 111 residues: Cell division protein FtsL (111 aa).

At 1-26 the chain is on the cytoplasmic side; it reads MAQARTEFSKVAAPRKLEEMYAQRGD. A helical membrane pass occupies residues 27–47; it reads LFPYLLAVLVLLTLVSVFHVW. The Periplasmic segment spans residues 48 to 111; that stretch reads SRVRVVDLNL…PTDQQVVVVK (64 aa). The stretch at 51-85 forms a coiled coil; that stretch reads RVVDLNLEVAEVARQLKVAQEEQNRLKLEVASLKT.

Belongs to the FtsL family.

Its subcellular location is the cell inner membrane. Essential cell division protein. The chain is Cell division protein FtsL from Geobacter sulfurreducens (strain ATCC 51573 / DSM 12127 / PCA).